Consider the following 278-residue polypeptide: MAIYAIGDVQGCYAELRRLLELIRFDPAKDRLLFTGDLVNRGPQSLETLRFIRGLGPAAATVLGNHDLHLLAVACGVSRVKHKDTFGDVLEAADRDELLAWLRTRPLVHREGSYCLVHAGIPPAWNAETAMARAGEVETVLAAGDITGFCRQMYGDKPDLWSDDLAGWDRLRFITNALTRMRYCDRTGRLDFRQKGAPGRQPASLVPWFDVPDRVPPGATIVFGHWSTLGYFAGKDCYCLDTGCLWGGELTALKLDGTLERYAVPSLHGGYQKPTLAK.

The protein belongs to the Ap4A hydrolase family.

It catalyses the reaction P(1),P(4)-bis(5'-adenosyl) tetraphosphate + H2O = 2 ADP + 2 H(+). In terms of biological role, hydrolyzes diadenosine 5',5'''-P1,P4-tetraphosphate to yield ADP. The sequence is that of Bis(5'-nucleosyl)-tetraphosphatase, symmetrical from Methylococcus capsulatus (strain ATCC 33009 / NCIMB 11132 / Bath).